A 141-amino-acid chain; its full sequence is 16 kDa protein (141 aa).

Residues 95–116 (ESSSATRKKSHNSKNSKKKFKE) form a disordered region. Residues 100–113 (TRKKSHNSKNSKKK) show a composition bias toward basic residues.

The sequence is that of 16 kDa protein from Tobacco rattle virus (strain PSG).